Here is a 351-residue protein sequence, read N- to C-terminus: 4-hydroxy-3-methylbut-2-enyl diphosphate reductase (351 aa).

C18 contributes to the [4Fe-4S] cluster binding site. Positions 47 and 83 each coordinate (2E)-4-hydroxy-3-methylbut-2-enyl diphosphate. Residues H47 and H83 each contribute to the dimethylallyl diphosphate site. 2 residues coordinate isopentenyl diphosphate: H47 and H83. C105 is a binding site for [4Fe-4S] cluster. H133 contributes to the (2E)-4-hydroxy-3-methylbut-2-enyl diphosphate binding site. A dimethylallyl diphosphate-binding site is contributed by H133. An isopentenyl diphosphate-binding site is contributed by H133. E135 serves as the catalytic Proton donor. T174 lines the (2E)-4-hydroxy-3-methylbut-2-enyl diphosphate pocket. C204 is a binding site for [4Fe-4S] cluster. 4 residues coordinate (2E)-4-hydroxy-3-methylbut-2-enyl diphosphate: S232, S233, N234, and S277. Residues S232, S233, N234, and S277 each contribute to the dimethylallyl diphosphate site. Residues S232, S233, N234, and S277 each contribute to the isopentenyl diphosphate site.

This sequence belongs to the IspH family. The cofactor is [4Fe-4S] cluster.

The enzyme catalyses isopentenyl diphosphate + 2 oxidized [2Fe-2S]-[ferredoxin] + H2O = (2E)-4-hydroxy-3-methylbut-2-enyl diphosphate + 2 reduced [2Fe-2S]-[ferredoxin] + 2 H(+). It catalyses the reaction dimethylallyl diphosphate + 2 oxidized [2Fe-2S]-[ferredoxin] + H2O = (2E)-4-hydroxy-3-methylbut-2-enyl diphosphate + 2 reduced [2Fe-2S]-[ferredoxin] + 2 H(+). It participates in isoprenoid biosynthesis; dimethylallyl diphosphate biosynthesis; dimethylallyl diphosphate from (2E)-4-hydroxy-3-methylbutenyl diphosphate: step 1/1. It functions in the pathway isoprenoid biosynthesis; isopentenyl diphosphate biosynthesis via DXP pathway; isopentenyl diphosphate from 1-deoxy-D-xylulose 5-phosphate: step 6/6. Catalyzes the conversion of 1-hydroxy-2-methyl-2-(E)-butenyl 4-diphosphate (HMBPP) into a mixture of isopentenyl diphosphate (IPP) and dimethylallyl diphosphate (DMAPP). Acts in the terminal step of the DOXP/MEP pathway for isoprenoid precursor biosynthesis. This chain is 4-hydroxy-3-methylbut-2-enyl diphosphate reductase, found in Bartonella tribocorum (strain CIP 105476 / IBS 506).